The chain runs to 483 residues: SWI/SNF-related matrix-associated actin-dependent regulator of chromatin subfamily D member 3 (483 aa).

A2 is subject to N-acetylalanine. The interval R27–K102 is disordered. Positions Q78–V88 are enriched in low complexity. S178 is subject to Phosphoserine. The region spanning Y258–P335 is the SWIB/MDM2 domain.

This sequence belongs to the SMARCD family. In terms of assembly, component of the multiprotein chromatin-remodeling complexes SWI/SNF: SWI/SNF-A (BAF), SWI/SNF-B (PBAF) and related complexes. The canonical complex contains a catalytic subunit (either SMARCA4/BRG1/BAF190A or SMARCA2/BRM/BAF190B) and at least SMARCE1, ACTL6A/BAF53, SMARCC1/BAF155, SMARCC2/BAF170, and SMARCB1/SNF5/BAF47. Other subunits specific to each of the complexes may also be present permitting several possible combinations developmentally and tissue specific. Component of the BAF complex, which includes at least actin (ACTB), ARID1A/BAF250A, ARID1B/BAF250B, SMARCA2/BRM, SMARCA4/BRG1/BAF190A, ACTL6A/BAF53, ACTL6B/BAF53B, SMARCE1/BAF57, SMARCC1/BAF155, SMARCC2/BAF170, SMARCB1/SNF5/INI1, and one or more SMARCD1/BAF60A, SMARCD2/BAF60B, or SMARCD3/BAF60C. In muscle cells, the BAF complex also contains DPF3. Component of neural progenitors-specific chromatin remodeling complex (npBAF complex) composed of at least, ARID1A/BAF250A or ARID1B/BAF250B, SMARCD1/BAF60A, SMARCD3/BAF60C, SMARCA2/BRM/BAF190B, SMARCA4/BRG1/BAF190A, SMARCB1/BAF47, SMARCC1/BAF155, SMARCE1/BAF57, SMARCC2/BAF170, PHF10/BAF45A, ACTL6A/BAF53A and actin. Component of neuron-specific chromatin remodeling complex (nBAF complex) composed of at least, ARID1A/BAF250A or ARID1B/BAF250B, SMARCD1/BAF60A, SMARCD3/BAF60C, SMARCA2/BRM/BAF190B, SMARCA4/BRG1/BAF190A, SMARCB1/BAF47, SMARCC1/BAF155, SMARCE1/BAF57, SMARCC2/BAF170, DPF1/BAF45B, DPF3/BAF45C, ACTL6B/BAF53B and actin. May be a component of the SWI/SNF-B (PBAF) chromatin remodeling complex, at least composed of SMARCA4/BRG1, SMARCB1/BAF47/SNF5, ACTL6A/BAF53A or ACTL6B/BAF53B, SMARCE1/BAF57, SMARCD1/BAF60A, SMARCD2/BAF60B, perhaps SMARCD3/BAF60C, SMARCC1/BAF155, SMARCC2/BAF170, PBRM1/BAF180, ARID2/BAF200 and actin. Component of SWI/SNF (GBAF) subcomplex, which includes at least BICRA or BICRAL (mutually exclusive), BRD9, SS18, SMARCA2/BRM, SMARCA4/BRG1/BAF190A, ACTL6A/BAF53, SMARCC1/BAF155, and SMARCD1/BAF60A. Interacts with SMARCA4/BRG1/BAF190A. The precise distribution of the related SMARCD1, SMARCD2 and SMARCD3 proteins among these and other SWI/SNF nucleosome-remodeling complexes is not fully known. May allow recruitment of SWI/SNF containing complexes specifically to promoters where these factors are located. Also interacts with several nuclear receptors including PPARG/NR1C3, RXRA/NR1F1, ESR1, NR5A1, NR5A2/LRH1 and other transcriptional activators including the HLH protein SREBF1/SREBP1 and the homeobox protein PBX1. Interacts with PRDM1/BLIMP1. As to expression, ubiquitously expressed.

It is found in the nucleus. In terms of biological role, involved in transcriptional activation and repression of select genes by chromatin remodeling (alteration of DNA-nucleosome topology). Component of SWI/SNF chromatin remodeling complexes that carry out key enzymatic activities, changing chromatin structure by altering DNA-histone contacts within a nucleosome in an ATP-dependent manner. Stimulates nuclear receptor mediated transcription. Belongs to the neural progenitors-specific chromatin remodeling complex (npBAF complex) and the neuron-specific chromatin remodeling complex (nBAF complex). During neural development a switch from a stem/progenitor to a postmitotic chromatin remodeling mechanism occurs as neurons exit the cell cycle and become committed to their adult state. The transition from proliferating neural stem/progenitor cells to postmitotic neurons requires a switch in subunit composition of the npBAF and nBAF complexes. As neural progenitors exit mitosis and differentiate into neurons, npBAF complexes which contain ACTL6A/BAF53A and PHF10/BAF45A, are exchanged for homologous alternative ACTL6B/BAF53B and DPF1/BAF45B or DPF3/BAF45C subunits in neuron-specific complexes (nBAF). The npBAF complex is essential for the self-renewal/proliferative capacity of the multipotent neural stem cells. The nBAF complex along with CREST plays a role regulating the activity of genes essential for dendrite growth. The sequence is that of SWI/SNF-related matrix-associated actin-dependent regulator of chromatin subfamily D member 3 (Smarcd3) from Mus musculus (Mouse).